A 245-amino-acid chain; its full sequence is Phosphoribosylaminoimidazole-succinocarboxamide synthase (245 aa).

The protein belongs to the SAICAR synthetase family.

It carries out the reaction 5-amino-1-(5-phospho-D-ribosyl)imidazole-4-carboxylate + L-aspartate + ATP = (2S)-2-[5-amino-1-(5-phospho-beta-D-ribosyl)imidazole-4-carboxamido]succinate + ADP + phosphate + 2 H(+). Its pathway is purine metabolism; IMP biosynthesis via de novo pathway; 5-amino-1-(5-phospho-D-ribosyl)imidazole-4-carboxamide from 5-amino-1-(5-phospho-D-ribosyl)imidazole-4-carboxylate: step 1/2. In Trichormus variabilis (strain ATCC 29413 / PCC 7937) (Anabaena variabilis), this protein is Phosphoribosylaminoimidazole-succinocarboxamide synthase.